Consider the following 481-residue polypeptide: Membrane-bound lytic murein transglycosylase F (481 aa).

Positions Met-1 to Ala-21 are cleaved as a signal peptide. Positions Leu-22–Val-268 are non-LT domain. The tract at residues Gly-269 to Glu-481 is LT domain. Residue Glu-313 is part of the active site.

This sequence in the N-terminal section; belongs to the bacterial solute-binding protein 3 family. In the C-terminal section; belongs to the transglycosylase Slt family.

Its subcellular location is the cell outer membrane. The enzyme catalyses Exolytic cleavage of the (1-&gt;4)-beta-glycosidic linkage between N-acetylmuramic acid (MurNAc) and N-acetylglucosamine (GlcNAc) residues in peptidoglycan, from either the reducing or the non-reducing ends of the peptidoglycan chains, with concomitant formation of a 1,6-anhydrobond in the MurNAc residue.. In terms of biological role, murein-degrading enzyme that degrades murein glycan strands and insoluble, high-molecular weight murein sacculi, with the concomitant formation of a 1,6-anhydromuramoyl product. Lytic transglycosylases (LTs) play an integral role in the metabolism of the peptidoglycan (PG) sacculus. Their lytic action creates space within the PG sacculus to allow for its expansion as well as for the insertion of various structures such as secretion systems and flagella. This is Membrane-bound lytic murein transglycosylase F from Pectobacterium atrosepticum (strain SCRI 1043 / ATCC BAA-672) (Erwinia carotovora subsp. atroseptica).